The chain runs to 471 residues: uncharacterized protein (471 aa).

Helical transmembrane passes span 10–30 (ALWLLDFLTFNISFLLSLFVI), 46–66 (IDDRTYIHAVLAGICVGWFAI), 87–107 (TLIIFAIFELAIVAFPKLYFS), and 280–300 (IVVGSLAIIIFSPVLLYLYFA).

It belongs to the bacterial sugar transferase family.

It is found in the cell membrane. It functions in the pathway glycan metabolism; exopolysaccharide biosynthesis. Its function is as follows. May function as a sugar transferase. This is an uncharacterized protein from Haemophilus influenzae (strain ATCC 51907 / DSM 11121 / KW20 / Rd).